A 208-amino-acid chain; its full sequence is Heart- and neural crest derivatives-expressed protein 2 (208 aa).

Disordered stretches follow at residues 79-106 (AGAVGMGPRTVKRRPTANRKERRRTQSI) and 161-197 (EFKKTDAKEERRKKEMNDVLKSSGSSNDKKTKGRTGW). Basic residues predominate over residues 88–103 (TVKRRPTANRKERRRT). The bHLH domain occupies 90 to 142 (KRRPTANRKERRRTQSINSAFAELRECIPNVPADTKLSKIKTLRLATSYIAYL). Residues 161–178 (EFKKTDAKEERRKKEMND) show a composition bias toward basic and acidic residues.

Efficient DNA binding requires dimerization with another bHLH protein.

The protein localises to the nucleus. In terms of biological role, essential for myocardial and pectoral fin differentiation, patterning and morphogenesis. The protein is Heart- and neural crest derivatives-expressed protein 2 (hand2) of Danio rerio (Zebrafish).